The chain runs to 373 residues: MKLFFRIVTLVAVVAMSLADMAPAWALTSRIKDIASLQAGRDNQLIGYGLIVGLQGTGDGFRSSPFTEQSMRAMLQNLGISTQGGQSNAKNTAAVMVTANLPPFASPGSRLDVTVSSLGDATSLRGGTLVMTSLSGADGQIYAVAQGSVIVSGFQAQGQAATVTEGVTTAGRVPGGAIIERELPSHFKDSVNLVLQLRNPDFSTAIRIADIVNGYASARFGGPVAEAKDSQEVVIQKPRTADLTRLMADVENLIVETDTPAKVVINERTGTIVIGSDVRVSPVAVSYGTLTVQVTETPQIIQPEPFSRGRTAVQPQTDIAAEQTGGRVAIIDGPDLRTLVAGLNNIGVKPDGIIAILQGIKSAGALQAELVLQ.

The first 26 residues, 1-26, serve as a signal peptide directing secretion; sequence MKLFFRIVTLVAVVAMSLADMAPAWA.

It belongs to the FlgI family. In terms of assembly, the basal body constitutes a major portion of the flagellar organelle and consists of four rings (L,P,S, and M) mounted on a central rod.

It localises to the periplasm. Its subcellular location is the bacterial flagellum basal body. In terms of biological role, assembles around the rod to form the L-ring and probably protects the motor/basal body from shearing forces during rotation. The sequence is that of Flagellar P-ring protein from Rhizobium etli (strain ATCC 51251 / DSM 11541 / JCM 21823 / NBRC 15573 / CFN 42).